Consider the following 426-residue polypeptide: Enolase (426 aa).

(2R)-2-phosphoglycerate is bound at residue Gln163. Glu205 (proton donor) is an active-site residue. Mg(2+) contacts are provided by Asp242, Glu285, and Asp312. The (2R)-2-phosphoglycerate site is built by Lys337, Arg366, Ser367, and Lys388. Lys337 serves as the catalytic Proton acceptor.

It belongs to the enolase family. It depends on Mg(2+) as a cofactor.

It is found in the cytoplasm. Its subcellular location is the secreted. It localises to the cell surface. It carries out the reaction (2R)-2-phosphoglycerate = phosphoenolpyruvate + H2O. Its pathway is carbohydrate degradation; glycolysis; pyruvate from D-glyceraldehyde 3-phosphate: step 4/5. Its function is as follows. Catalyzes the reversible conversion of 2-phosphoglycerate (2-PG) into phosphoenolpyruvate (PEP). It is essential for the degradation of carbohydrates via glycolysis. This chain is Enolase, found in Gluconacetobacter diazotrophicus (strain ATCC 49037 / DSM 5601 / CCUG 37298 / CIP 103539 / LMG 7603 / PAl5).